A 124-amino-acid polypeptide reads, in one-letter code: MKIDGTVTTGLGKAAYFLSQDFYVNNFKKNCGFRPYPGTLNVIVPEEYLPQINKVKNECKNIIKPDEGFGAVKYIKARLNDEVTGAIVFPAKTTHEENYLEFIAKDKLRDKLNLEDGDTVSVEF.

10–15 lines the CDP pocket; it reads GLGKAA. Threonine 39 and asparagine 41 together coordinate Mg(2+). 2 residues coordinate FMN: threonine 93 and glutamate 101. 106–109 serves as a coordination point for CDP; the sequence is DKLR.

This sequence belongs to the archaeal riboflavin kinase family. Mg(2+) serves as cofactor.

It carries out the reaction riboflavin + CTP = CDP + FMN + H(+). The protein operates within cofactor biosynthesis; FMN biosynthesis; FMN from riboflavin (CTP route): step 1/1. In terms of biological role, catalyzes the CTP-dependent phosphorylation of riboflavin (vitamin B2) to form flavin mononucleotide (FMN). The sequence is that of Riboflavin kinase from Methanobrevibacter smithii (strain ATCC 35061 / DSM 861 / OCM 144 / PS).